A 1088-amino-acid chain; its full sequence is Methionine S-methyltransferase (1088 aa).

Belongs to the class I-like SAM-binding methyltransferase superfamily. In terms of assembly, homotetramer. Expressed in the shoot, scutellum, and aleurone cells but not in the root or endosperm.

It localises to the cytoplasm. The catalysed reaction is L-methionine + S-adenosyl-L-methionine = S-methyl-L-methionine + S-adenosyl-L-homocysteine. Its function is as follows. Catalyzes the S-methylmethionine (SMM) biosynthesis from adenosyl-L-homocysteine (AdoMet) and methionine. SMM biosynthesis (by MMT1) and degradation (by HMT-1, HMT-2 and HMT-3) constitute the SMM cycle in plants, which is probably required to achieve short term control of AdoMet level. Also able to catalyze the selenium-methylmethionine (SeMM) from AdoMet and selenium-methionine (SeMet). May play a role in phoem sulfur transport; such function is however not essential. This is Methionine S-methyltransferase (MMT1) from Hordeum vulgare (Barley).